The sequence spans 182 residues: MERYGKPELRATTVLGVIRNGKAALGSDGQMTLGNTVIKHSTRKIRRLRQAQIVTGFAGATADAVTLLDRFEEKLQTYGGLLERAAVELARDWRTDKYLRRLEAMLAVVSPEKALIISGTGDVIEPEDGIVAIGSGSMFALAAARSLMKHTDLNAADIVRESLLIAADICIYTNDHIVLEEV.

Thr-12 is a catalytic residue. Positions 167, 170, and 173 each coordinate Na(+).

This sequence belongs to the peptidase T1B family. HslV subfamily. As to quaternary structure, a double ring-shaped homohexamer of HslV is capped on each side by a ring-shaped HslU homohexamer. The assembly of the HslU/HslV complex is dependent on binding of ATP.

It localises to the cytoplasm. It carries out the reaction ATP-dependent cleavage of peptide bonds with broad specificity.. Allosterically activated by HslU binding. Functionally, protease subunit of a proteasome-like degradation complex believed to be a general protein degrading machinery. The polypeptide is ATP-dependent protease subunit HslV (Chlorobium phaeobacteroides (strain BS1)).